We begin with the raw amino-acid sequence, 216 residues long: Pyridoxine/pyridoxamine 5'-phosphate oxidase (216 aa).

FMN is bound by residues 65-70, 80-81, Arg86, Lys87, and Gln109; these read RMVLLK and YT. Substrate is bound at residue Lys70. The substrate site is built by Tyr127, Arg131, and Ser135. FMN-binding positions include 144–145 and Trp189; that span reads QS. A substrate-binding site is contributed by 195–197; the sequence is RLH. Arg199 serves as a coordination point for FMN.

The protein belongs to the pyridoxamine 5'-phosphate oxidase family. Homodimer. It depends on FMN as a cofactor.

The enzyme catalyses pyridoxamine 5'-phosphate + O2 + H2O = pyridoxal 5'-phosphate + H2O2 + NH4(+). It carries out the reaction pyridoxine 5'-phosphate + O2 = pyridoxal 5'-phosphate + H2O2. It participates in cofactor metabolism; pyridoxal 5'-phosphate salvage; pyridoxal 5'-phosphate from pyridoxamine 5'-phosphate: step 1/1. The protein operates within cofactor metabolism; pyridoxal 5'-phosphate salvage; pyridoxal 5'-phosphate from pyridoxine 5'-phosphate: step 1/1. Catalyzes the oxidation of either pyridoxine 5'-phosphate (PNP) or pyridoxamine 5'-phosphate (PMP) into pyridoxal 5'-phosphate (PLP). The chain is Pyridoxine/pyridoxamine 5'-phosphate oxidase from Sphingopyxis alaskensis (strain DSM 13593 / LMG 18877 / RB2256) (Sphingomonas alaskensis).